The sequence spans 254 residues: 5-oxoprolinase subunit A (254 aa).

The protein belongs to the LamB/PxpA family. Forms a complex composed of PxpA, PxpB and PxpC.

The catalysed reaction is 5-oxo-L-proline + ATP + 2 H2O = L-glutamate + ADP + phosphate + H(+). Catalyzes the cleavage of 5-oxoproline to form L-glutamate coupled to the hydrolysis of ATP to ADP and inorganic phosphate. The polypeptide is 5-oxoprolinase subunit A (Heliobacterium modesticaldum (strain ATCC 51547 / Ice1)).